Here is a 233-residue protein sequence, read N- to C-terminus: Protein lin-7 homolog A (233 aa).

The L27 domain maps to 25-80; that stretch reads LDRDVARAIELLEKLQESGEVPVHKLQSLKKVLQSEFCTAIREVYQYMHETITVNG. The region spanning 108–190 is the PDZ domain; it reads VVELPKTDEG…SVKLVVRYTP (83 aa).

It belongs to the lin-7 family. As to quaternary structure, forms a complex with CASK and CASKIN1. Component of the brain-specific heterotrimeric complex (LIN-10-LIN-2-LIN-7 complex) composed of at least APBA1, CASK, and LIN7, which associates with the motor protein KIF17 to transport vesicles along microtubules. Can also interact with other modular proteins containing protein-protein interaction domains like PALS1, PALS2, MPP7, DLG1, DLG2 and DLG3 through its L27 domain. Interacts with DLG4, GRIN2B and MARCHF11 as well as CDH1 and CTNNB1, the channels KCNJ12/Kir2.2, KCNJ4/Kir2.3 and probably KCNJ2/Kir2.1 and SLC6A12/BGT-1 via its PDZ domain. The association of LIN7A with cadherin and beta-catenin is calcium-dependent, occurs at synaptic junctions and requires the actin cytoskeleton. Interacts with EGFR, ERBB2, ERBB3 and ERBB4 with both PDZ and KID domains. Associates with KIF17 via APBA1. Interacts with HTR4. Forms a tripartite complex composed of DLG1, MPP7 and LIN7 (LIN7A or LIN7C).

It localises to the cell membrane. The protein localises to the basolateral cell membrane. The protein resides in the cell junction. Its subcellular location is the postsynaptic density membrane. It is found in the tight junction. In terms of biological role, plays a role in establishing and maintaining the asymmetric distribution of channels and receptors at the plasma membrane of polarized cells. Forms membrane-associated multiprotein complexes that may regulate delivery and recycling of proteins to the correct membrane domains. The tripartite complex composed of LIN7 (LIN7A, LIN7B or LIN7C), CASK and APBA1 associates with the motor protein KIF17 to transport vesicles containing N-methyl-D-aspartate (NMDA) receptor subunit NR2B along microtubules. This complex may have the potential to couple synaptic vesicle exocytosis to cell adhesion in brain. Ensures the proper localization of GRIN2B (subunit 2B of the NMDA receptor) to neuronal postsynaptic density and may function in localizing synaptic vesicles at synapses where it is recruited by beta-catenin and cadherin. Required to localize Kir2 channels, GABA transporter (SLC6A12) and EGFR/ERBB1, ERBB2, ERBB3 and ERBB4 to the basolateral membrane of epithelial cells. In Bos taurus (Bovine), this protein is Protein lin-7 homolog A (LIN7A).